The chain runs to 460 residues: Chromosomal replication initiator protein DnaA (460 aa).

The domain I, interacts with DnaA modulators stretch occupies residues Met-1–Ala-84. Residues Ala-84–Ser-123 form a domain II region. The domain III, AAA+ region stretch occupies residues Asn-124–Ala-340. Residues Gly-168, Gly-170, Lys-171, and Thr-172 each coordinate ATP. The segment at Asn-341–Ser-460 is domain IV, binds dsDNA.

The protein belongs to the DnaA family. Oligomerizes as a right-handed, spiral filament on DNA at oriC.

It is found in the cytoplasm. In terms of biological role, plays an essential role in the initiation and regulation of chromosomal replication. ATP-DnaA binds to the origin of replication (oriC) to initiate formation of the DNA replication initiation complex once per cell cycle. Binds the DnaA box (a 9 base pair repeat at the origin) and separates the double-stranded (ds)DNA. Forms a right-handed helical filament on oriC DNA; dsDNA binds to the exterior of the filament while single-stranded (ss)DNA is stabiized in the filament's interior. The ATP-DnaA-oriC complex binds and stabilizes one strand of the AT-rich DNA unwinding element (DUE), permitting loading of DNA polymerase. After initiation quickly degrades to an ADP-DnaA complex that is not apt for DNA replication. Binds acidic phospholipids. In Shewanella oneidensis (strain ATCC 700550 / JCM 31522 / CIP 106686 / LMG 19005 / NCIMB 14063 / MR-1), this protein is Chromosomal replication initiator protein DnaA.